Consider the following 89-residue polypeptide: Small ribosomal subunit protein uS15 (89 aa).

Belongs to the universal ribosomal protein uS15 family. Part of the 30S ribosomal subunit. Forms a bridge to the 50S subunit in the 70S ribosome, contacting the 23S rRNA.

Functionally, one of the primary rRNA binding proteins, it binds directly to 16S rRNA where it helps nucleate assembly of the platform of the 30S subunit by binding and bridging several RNA helices of the 16S rRNA. Forms an intersubunit bridge (bridge B4) with the 23S rRNA of the 50S subunit in the ribosome. This is Small ribosomal subunit protein uS15 from Brucella abortus (strain S19).